Here is a 116-residue protein sequence, read N- to C-terminus: NADPH-dependent 7-cyano-7-deazaguanine reductase (116 aa).

The active-site Thioimide intermediate is Cys-31. The active-site Proton donor is the Asp-38. Substrate-binding positions include Val-53–Leu-55 and Tyr-72–Glu-73.

It belongs to the GTP cyclohydrolase I family. QueF type 1 subfamily.

It localises to the cytoplasm. It catalyses the reaction 7-aminomethyl-7-carbaguanine + 2 NADP(+) = 7-cyano-7-deazaguanine + 2 NADPH + 3 H(+). It functions in the pathway tRNA modification; tRNA-queuosine biosynthesis. Functionally, catalyzes the NADPH-dependent reduction of 7-cyano-7-deazaguanine (preQ0) to 7-aminomethyl-7-deazaguanine (preQ1). The polypeptide is NADPH-dependent 7-cyano-7-deazaguanine reductase (Chloroherpeton thalassium (strain ATCC 35110 / GB-78)).